The chain runs to 174 residues: Co-chaperone protein HscB homolog (174 aa).

The 73-residue stretch at N2–L74 folds into the J domain.

The protein belongs to the HscB family. In terms of assembly, interacts with HscA and stimulates its ATPase activity.

Functionally, co-chaperone involved in the maturation of iron-sulfur cluster-containing proteins. Seems to help targeting proteins to be folded toward HscA. The protein is Co-chaperone protein HscB homolog of Shewanella baltica (strain OS185).